Consider the following 98-residue polypeptide: Ferredoxin-like protein (98 aa).

Residues 57 to 87 (GQVEVTADGCMECGTCRVLCEANGDVEWSYP) form the 4Fe-4S ferredoxin-type domain.

The protein to ferredoxins from P.putida and C.tartarivorum, ferredoxin I from A.vinelandii, ferredoxin II from D.desulfuricans.

In terms of biological role, could be a 3Fe-4S cluster-containing protein. The chain is Ferredoxin-like protein (fixX) from Rhizobium meliloti (strain 1021) (Ensifer meliloti).